The primary structure comprises 219 residues: MGQKIHPIGFRLGITQKHRSCWFANPKQYPTLLQEDHLIRQYIEKNLSNAGIAQIYIQRKADRIELELRTARPGVVVGRGGRGIEVLRKGLKDLLGEQKQIRINVIEVKQIDAEAALIGEFITQQLERRVAFRRIVRKAITRAQRRGIEGIKIQISGRLNGAEIARSEWSREGRVPLQTLRAEIDYSYKRAQTIYGVLGVKVWIFKGEVIPGNPTEISE.

The KH type-2 domain occupies 39-109 (IRQYIEKNLS…QIRINVIEVK (71 aa)).

It belongs to the universal ribosomal protein uS3 family. In terms of assembly, part of the 30S ribosomal subunit.

Its subcellular location is the plastid. It is found in the cyanelle. This is Small ribosomal subunit protein uS3c (rps3) from Cyanophora paradoxa.